We begin with the raw amino-acid sequence, 249 residues long: ATP synthase subunits region ORF 6 (249 aa).

In Fuscovulum blasticum (Rhodobacter blasticus), this protein is ATP synthase subunits region ORF 6.